Reading from the N-terminus, the 134-residue chain is Large ribosomal subunit protein uL14 (134 aa).

Belongs to the universal ribosomal protein uL14 family. In terms of assembly, in the 70S ribosome, L14 and L19 interact and together make contacts with the 16S rRNA in bridges B5 and B8. Part of the 50S ribosomal subunit. Forms a cluster with proteins L3 and L19.

Its function is as follows. Forms part of two intersubunit bridges in the 70S ribosome. Binds to 23S rRNA. This is Large ribosomal subunit protein uL14 from Deinococcus radiodurans (strain ATCC 13939 / DSM 20539 / JCM 16871 / CCUG 27074 / LMG 4051 / NBRC 15346 / NCIMB 9279 / VKM B-1422 / R1).